Consider the following 102-residue polypeptide: NADH-quinone oxidoreductase subunit K (102 aa).

3 helical membrane-spanning segments follow: residues 6–26, 30–50, and 62–82; these read LEHGLAVAGVLFCLGLVGLMV, ILFVLMSLEIMMNAAALAFVV, and VMFILVISLAAAEASIGLAIL.

It belongs to the complex I subunit 4L family. NDH-1 is composed of 13 different subunits. Subunits NuoA, H, J, K, L, M, N constitute the membrane sector of the complex.

The protein localises to the cell inner membrane. The catalysed reaction is a quinone + NADH + 5 H(+)(in) = a quinol + NAD(+) + 4 H(+)(out). NDH-1 shuttles electrons from NADH, via FMN and iron-sulfur (Fe-S) centers, to quinones in the respiratory chain. The immediate electron acceptor for the enzyme in this species is believed to be ubiquinone. Couples the redox reaction to proton translocation (for every two electrons transferred, four hydrogen ions are translocated across the cytoplasmic membrane), and thus conserves the redox energy in a proton gradient. In Pseudomonas syringae pv. tomato (strain ATCC BAA-871 / DC3000), this protein is NADH-quinone oxidoreductase subunit K.